The primary structure comprises 215 residues: Probable cutinase 3 (215 aa).

Residues 1 to 17 (MHFRALLVSALATLAMA) form the signal peptide. 2 disulfide bridges follow: cysteine 39–cysteine 118 and cysteine 65–cysteine 79. Serine 129 (nucleophile) is an active-site residue. Cysteine 180 and cysteine 187 are oxidised to a cystine. Aspartate 184 is a catalytic residue. Histidine 197 (proton donor/acceptor) is an active-site residue.

It belongs to the cutinase family.

It localises to the secreted. It carries out the reaction cutin + H2O = cutin monomers.. Its function is as follows. Catalyzes the hydrolysis of complex carboxylic polyesters found in the cell wall of plants. Degrades cutin, a macromolecule that forms the structure of the plant cuticle. In Aspergillus clavatus (strain ATCC 1007 / CBS 513.65 / DSM 816 / NCTC 3887 / NRRL 1 / QM 1276 / 107), this protein is Probable cutinase 3.